A 647-amino-acid chain; its full sequence is Nucleoside triphosphatase I (647 aa).

Residues 48–213 enclose the Helicase ATP-binding domain; that stretch reads FIGLSELNSL…KYLINLLRPK (166 aa). ATP is bound at residue 61–68; sequence WDTGYGKT. Positions 150 to 153 match the DEXH box motif; that stretch reads DEVH. Residues 377–540 form the Helicase C-terminal domain; the sequence is YIEACKIILN…KINVLNSFMK (164 aa). Positions 466–532 are binding to the cap-specific mRNA (nucleoside-2'-O-)-methyltransferase; it reads DIIILDLPWK…DLIKSKQDKI (67 aa).

This sequence belongs to the helicase family. NPH I subfamily. As to quaternary structure, monomer. Interacts (via C-terminus) with RAP94 (via N-terminus). Interacts with the cap-specific mRNA (nucleoside-2'-O-)-methyltransferase.

The protein resides in the virion. It carries out the reaction a ribonucleoside 5'-triphosphate + H2O = a ribonucleoside 5'-diphosphate + phosphate + H(+). In terms of biological role, DNA-dependent ATPase required for providing the needed energy to achieve the termination of early transcripts. Acts in concert with the RAP94 subunit of the virion RNA polymerase and the capping enzyme/VTF to catalyze release of UUUUUNU-containing nascent RNA from the elongation complex. NPH-I must bind ssDNA in order to exhibit ATPase activity. This Melanoplus sanguinipes entomopoxvirus (MsEPV) protein is Nucleoside triphosphatase I (NPH1).